The sequence spans 287 residues: Acetylglutamate kinase (287 aa).

Residues 65–66 (GG), arginine 87, and asparagine 181 each bind substrate.

It belongs to the acetylglutamate kinase family. ArgB subfamily.

Its subcellular location is the cytoplasm. The enzyme catalyses N-acetyl-L-glutamate + ATP = N-acetyl-L-glutamyl 5-phosphate + ADP. The protein operates within amino-acid biosynthesis; L-arginine biosynthesis; N(2)-acetyl-L-ornithine from L-glutamate: step 2/4. Its function is as follows. Catalyzes the ATP-dependent phosphorylation of N-acetyl-L-glutamate. The chain is Acetylglutamate kinase from Syntrophomonas wolfei subsp. wolfei (strain DSM 2245B / Goettingen).